A 102-amino-acid polypeptide reads, in one-letter code: NADH-quinone oxidoreductase subunit K (102 aa).

Transmembrane regions (helical) follow at residues 5-25, 31-51, and 66-86; these read ITHYLTVSALMFTIGIAGIFL, IIILMSIELILLSVNINFVAF, and FVLTVAAAEAAIGLAILVVFF.

Belongs to the complex I subunit 4L family. As to quaternary structure, NDH-1 is composed of 14 different subunits. Subunits NuoA, H, J, K, L, M, N constitute the membrane sector of the complex.

Its subcellular location is the cell inner membrane. The enzyme catalyses a quinone + NADH + 5 H(+)(in) = a quinol + NAD(+) + 4 H(+)(out). NDH-1 shuttles electrons from NADH, via FMN and iron-sulfur (Fe-S) centers, to quinones in the respiratory chain. The immediate electron acceptor for the enzyme in this species is believed to be ubiquinone. Couples the redox reaction to proton translocation (for every two electrons transferred, four hydrogen ions are translocated across the cytoplasmic membrane), and thus conserves the redox energy in a proton gradient. The polypeptide is NADH-quinone oxidoreductase subunit K (Bartonella tribocorum (strain CIP 105476 / IBS 506)).